A 356-amino-acid chain; its full sequence is UDP-3-O-acylglucosamine N-acyltransferase (356 aa).

His251 serves as the catalytic Proton acceptor.

It belongs to the transferase hexapeptide repeat family. LpxD subfamily. In terms of assembly, homotrimer.

It carries out the reaction a UDP-3-O-[(3R)-3-hydroxyacyl]-alpha-D-glucosamine + a (3R)-hydroxyacyl-[ACP] = a UDP-2-N,3-O-bis[(3R)-3-hydroxyacyl]-alpha-D-glucosamine + holo-[ACP] + H(+). The protein operates within bacterial outer membrane biogenesis; LPS lipid A biosynthesis. Its function is as follows. Catalyzes the N-acylation of UDP-3-O-acylglucosamine using 3-hydroxyacyl-ACP as the acyl donor. Is involved in the biosynthesis of lipid A, a phosphorylated glycolipid that anchors the lipopolysaccharide to the outer membrane of the cell. The sequence is that of UDP-3-O-acylglucosamine N-acyltransferase from Ralstonia nicotianae (strain ATCC BAA-1114 / GMI1000) (Ralstonia solanacearum).